A 273-amino-acid chain; its full sequence is 3-methyl-2-oxobutanoate hydroxymethyltransferase (273 aa).

Positions 53 and 92 each coordinate Mg(2+). 3-methyl-2-oxobutanoate contacts are provided by residues 53 to 54 (DS), Asp92, and Lys120. Glu122 lines the Mg(2+) pocket. Glu189 acts as the Proton acceptor in catalysis.

This sequence belongs to the PanB family. In terms of assembly, homodecamer; pentamer of dimers. The cofactor is Mg(2+).

It is found in the cytoplasm. The enzyme catalyses 3-methyl-2-oxobutanoate + (6R)-5,10-methylene-5,6,7,8-tetrahydrofolate + H2O = 2-dehydropantoate + (6S)-5,6,7,8-tetrahydrofolate. The protein operates within cofactor biosynthesis; (R)-pantothenate biosynthesis; (R)-pantoate from 3-methyl-2-oxobutanoate: step 1/2. Catalyzes the reversible reaction in which hydroxymethyl group from 5,10-methylenetetrahydrofolate is transferred onto alpha-ketoisovalerate to form ketopantoate. In Cupriavidus pinatubonensis (strain JMP 134 / LMG 1197) (Cupriavidus necator (strain JMP 134)), this protein is 3-methyl-2-oxobutanoate hydroxymethyltransferase.